The primary structure comprises 908 residues: Translation initiation factor IF-2 (908 aa).

Disordered regions lie at residues 52-229 (QSHG…AEEA) and 241-316 (AGQY…SAQH). The segment covering 65-84 (KSKTTSTARVTGSSGKSKSV) has biased composition (polar residues). Basic and acidic residues-rich tracts occupy residues 94 to 108 (FEKP…ELAA), 120 to 138 (AAKD…EERQ), 176 to 185 (IEVKPKEQPK), 193 to 229 (PKVE…AEEA), 270 to 280 (SFEKERREIKR), and 294 to 303 (KNQDEREIKN). The tr-type G domain maps to 409 to 578 (TRPPVVTIMG…SLQAELMELE (170 aa)). The segment at 418-425 (GHVDHGKT) is G1. 418-425 (GHVDHGKT) serves as a coordination point for GTP. The segment at 443–447 (GITQH) is G2. The G3 stretch occupies residues 464-467 (DTPG). GTP is bound by residues 464-468 (DTPGH) and 518-521 (NKMD). The segment at 518–521 (NKMD) is G4. The segment at 554-556 (SAK) is G5.

It belongs to the TRAFAC class translation factor GTPase superfamily. Classic translation factor GTPase family. IF-2 subfamily.

It is found in the cytoplasm. Its function is as follows. One of the essential components for the initiation of protein synthesis. Protects formylmethionyl-tRNA from spontaneous hydrolysis and promotes its binding to the 30S ribosomal subunits. Also involved in the hydrolysis of GTP during the formation of the 70S ribosomal complex. This chain is Translation initiation factor IF-2, found in Psychrobacter arcticus (strain DSM 17307 / VKM B-2377 / 273-4).